Here is a 367-residue protein sequence, read N- to C-terminus: Cytochrome b (367 aa).

A run of 4 helical transmembrane segments spans residues 33 to 53 (FGSL…FLAM), 77 to 98 (WVLR…YLHI), 113 to 133 (WNMG…GYVL), and 178 to 198 (FFAF…VHLL). His-83 and His-97 together coordinate heme b. Residues His-182 and His-196 each coordinate heme b. His-201 lines the a ubiquinone pocket. 4 consecutive transmembrane segments (helical) span residues 226-246 (IKDI…VLFS), 288-308 (LGGV…PFLH), 320-340 (FSQC…WIGG), and 347-367 (YIII…VIMP).

The protein belongs to the cytochrome b family. As to quaternary structure, the cytochrome bc1 complex contains 11 subunits: 3 respiratory subunits (MT-CYB, CYC1 and UQCRFS1), 2 core proteins (UQCRC1 and UQCRC2) and 6 low-molecular weight proteins (UQCRH/QCR6, UQCRB/QCR7, UQCRQ/QCR8, UQCR10/QCR9, UQCR11/QCR10 and a cleavage product of UQCRFS1). This cytochrome bc1 complex then forms a dimer. Requires heme b as cofactor.

It localises to the mitochondrion inner membrane. Its function is as follows. Component of the ubiquinol-cytochrome c reductase complex (complex III or cytochrome b-c1 complex) that is part of the mitochondrial respiratory chain. The b-c1 complex mediates electron transfer from ubiquinol to cytochrome c. Contributes to the generation of a proton gradient across the mitochondrial membrane that is then used for ATP synthesis. This chain is Cytochrome b (MT-CYB), found in Hypsugo savii (Savi's pipistrelle).